A 411-amino-acid polypeptide reads, in one-letter code: Putative competence-damage inducible protein (411 aa).

The protein belongs to the CinA family.

This is Putative competence-damage inducible protein from Desulforamulus reducens (strain ATCC BAA-1160 / DSM 100696 / MI-1) (Desulfotomaculum reducens).